The primary structure comprises 271 residues: Tryptophan synthase alpha chain (271 aa).

Active-site proton acceptor residues include Glu47 and Asp58.

This sequence belongs to the TrpA family. As to quaternary structure, tetramer of two alpha and two beta chains.

The catalysed reaction is (1S,2R)-1-C-(indol-3-yl)glycerol 3-phosphate + L-serine = D-glyceraldehyde 3-phosphate + L-tryptophan + H2O. It participates in amino-acid biosynthesis; L-tryptophan biosynthesis; L-tryptophan from chorismate: step 5/5. The alpha subunit is responsible for the aldol cleavage of indoleglycerol phosphate to indole and glyceraldehyde 3-phosphate. This chain is Tryptophan synthase alpha chain, found in Thermus thermophilus (strain ATCC BAA-163 / DSM 7039 / HB27).